Here is a 693-residue protein sequence, read N- to C-terminus: Polyribonucleotide nucleotidyltransferase (693 aa).

Positions 486 and 492 each coordinate Mg(2+). Positions 553 to 612 constitute a KH domain; that stretch reads PRFSSMRIDTEKIKDVIGKGGATIRSITEQTGTTIEIEDDGSVKIAATDKAAAANARRLI. An S1 motif domain is found at 622 to 690; it reads GRIYDAKVTK…RQGRVRLSIK (69 aa).

This sequence belongs to the polyribonucleotide nucleotidyltransferase family. In terms of assembly, component of the RNA degradosome, which is a multiprotein complex involved in RNA processing and mRNA degradation. Mg(2+) serves as cofactor.

The protein localises to the cytoplasm. It carries out the reaction RNA(n+1) + phosphate = RNA(n) + a ribonucleoside 5'-diphosphate. Functionally, involved in mRNA degradation. Catalyzes the phosphorolysis of single-stranded polyribonucleotides processively in the 3'- to 5'-direction. This is Polyribonucleotide nucleotidyltransferase from Dichelobacter nodosus (strain VCS1703A).